A 218-amino-acid chain; its full sequence is Cytochrome b6 (218 aa).

Residues 35 to 55 (IFYCLGGITLVCFLIQFATGF) form a helical membrane-spanning segment. Residue cysteine 38 coordinates heme c. The heme b site is built by histidine 89 and histidine 103. 3 consecutive transmembrane segments (helical) span residues 93–113 (ASMMVLMLILHVFRVYLTGGF), 119–139 (LTWITGVVMAVITVAFGVTGY), and 189–209 (LHTFVMPWLLAVFMLMHFLMI). Histidine 190 and histidine 205 together coordinate heme b.

This sequence belongs to the cytochrome b family. PetB subfamily. As to quaternary structure, the 4 large subunits of the cytochrome b6-f complex are cytochrome b6, subunit IV (17 kDa polypeptide, PetD), cytochrome f and the Rieske protein, while the 4 small subunits are PetG, PetL, PetM and PetN. The complex functions as a dimer. The cofactor is heme b. Heme c serves as cofactor.

It is found in the cellular thylakoid membrane. Its function is as follows. Component of the cytochrome b6-f complex, which mediates electron transfer between photosystem II (PSII) and photosystem I (PSI), cyclic electron flow around PSI, and state transitions. This Prochlorococcus marinus (strain NATL1A) protein is Cytochrome b6.